The primary structure comprises 147 residues: Large ribosomal subunit protein bL9 (147 aa).

It belongs to the bacterial ribosomal protein bL9 family.

Functionally, binds to the 23S rRNA. The sequence is that of Large ribosomal subunit protein bL9 from Geotalea daltonii (strain DSM 22248 / JCM 15807 / FRC-32) (Geobacter daltonii).